The primary structure comprises 419 residues: UDP-N-acetylglucosamine 1-carboxyvinyltransferase (419 aa).

A phosphoenolpyruvate-binding site is contributed by 22-23 (KN). R92 provides a ligand contact to UDP-N-acetyl-alpha-D-glucosamine. C116 functions as the Proton donor in the catalytic mechanism. C116 carries the post-translational modification 2-(S-cysteinyl)pyruvic acid O-phosphothioketal. UDP-N-acetyl-alpha-D-glucosamine is bound by residues D306 and I328.

The protein belongs to the EPSP synthase family. MurA subfamily.

The protein localises to the cytoplasm. The catalysed reaction is phosphoenolpyruvate + UDP-N-acetyl-alpha-D-glucosamine = UDP-N-acetyl-3-O-(1-carboxyvinyl)-alpha-D-glucosamine + phosphate. It functions in the pathway cell wall biogenesis; peptidoglycan biosynthesis. Its function is as follows. Cell wall formation. Adds enolpyruvyl to UDP-N-acetylglucosamine. The sequence is that of UDP-N-acetylglucosamine 1-carboxyvinyltransferase from Psychromonas ingrahamii (strain DSM 17664 / CCUG 51855 / 37).